The primary structure comprises 441 residues: ATP-dependent protease ATPase subunit HslU (441 aa).

ATP contacts are provided by residues isoleucine 18, 60–65 (GVGKTE), aspartate 254, glutamate 319, and arginine 391.

The protein belongs to the ClpX chaperone family. HslU subfamily. A double ring-shaped homohexamer of HslV is capped on each side by a ring-shaped HslU homohexamer. The assembly of the HslU/HslV complex is dependent on binding of ATP.

The protein localises to the cytoplasm. In terms of biological role, ATPase subunit of a proteasome-like degradation complex; this subunit has chaperone activity. The binding of ATP and its subsequent hydrolysis by HslU are essential for unfolding of protein substrates subsequently hydrolyzed by HslV. HslU recognizes the N-terminal part of its protein substrates and unfolds these before they are guided to HslV for hydrolysis. The sequence is that of ATP-dependent protease ATPase subunit HslU from Shewanella frigidimarina (strain NCIMB 400).